The primary structure comprises 351 residues: Putative phospho-N-acetylmuramoyl-pentapeptide-transferase (351 aa).

10 consecutive transmembrane segments (helical) span residues 2–22 (MEFLMVFIISTVSAAVFTLFI), 44–64 (AGTPTMGGLGMLLALLLVTVL), 71–91 (LVLTSLIVLTAAIVGLLDDLL), 158–178 (GEKILAQLLIGVFLVLSGAVG), 181–201 (GGFYLGLAAAPIAIAGMVGAI), 212–232 (GMAAGIMLIASLSCAIFLGLS), 235–255 (ALPFLALAGMCAGFLVFNRHP), 258–278 (IFMGDTGSFALGAGYATAVML), 281–301 (TVYFGVLAIAVPVVSVIVSLL), and 328–348 (IVLLYWLITLIVCALGLYMTG).

It belongs to the glycosyltransferase 4 family. MraY subfamily. Requires Mg(2+) as cofactor.

The protein localises to the cell membrane. It catalyses the reaction UDP-N-acetyl-alpha-D-muramoyl-L-alanyl-gamma-D-glutamyl-meso-2,6-diaminopimeloyl-D-alanyl-D-alanine + di-trans,octa-cis-undecaprenyl phosphate = di-trans,octa-cis-undecaprenyl diphospho-N-acetyl-alpha-D-muramoyl-L-alanyl-D-glutamyl-meso-2,6-diaminopimeloyl-D-alanyl-D-alanine + UMP. This is Putative phospho-N-acetylmuramoyl-pentapeptide-transferase from Methanothermobacter thermautotrophicus (strain ATCC 29096 / DSM 1053 / JCM 10044 / NBRC 100330 / Delta H) (Methanobacterium thermoautotrophicum).